The sequence spans 231 residues: MRMIRAIKQGQWAVLLWPYLLTASIPLDCRDEQGVLSHCPSISQEKLLDRVIQHAELIYRVSEESCSLFEEMFIPFPLQLQRNQAGYPCITKALPIPSSKSEIQQISDKWLLHSVLMLVQSWIEPLVYLQTTLNRYDGVPDMLLNKTKWVSEKLMSLEQGVVVLIKKMLDEEMMTTTYSEQGLFQDDGQPEMLEYVMRDYTLLSCFKKDAHKMEILLKLLKCRQNDMHSCR.

Residues 1-24 (MRMIRAIKQGQWAVLLWPYLLTAS) form the signal peptide. 3 disulfide bridges follow: Cys-29–Cys-39, Cys-89–Cys-205, and Cys-222–Cys-230. Asn-145 is a glycosylation site (N-linked (GlcNAc...) asparagine).

It belongs to the somatotropin/prolactin family. As to expression, pituitary gland.

It is found in the secreted. In Sparus aurata (Gilthead sea bream), this protein is Somatolactin-1.